Consider the following 320-residue polypeptide: Sucrose operon repressor (320 aa).

The region spanning 1 to 57 (MVAKLTDVAKLAGVSPTTVSRVINRKGYLSEKTITKVQAAMKTLGYKPNNLARSLQG) is the HTH lacI-type domain. Positions 5–24 (LTDVAKLAGVSPTTVSRVIN) form a DNA-binding region, H-T-H motif.

Functionally, negative regulator of scrB expression. The polypeptide is Sucrose operon repressor (scrR) (Streptococcus mutans serotype c (strain ATCC 700610 / UA159)).